The chain runs to 545 residues: Glucose-6-phosphate isomerase (545 aa).

The Proton donor role is filled by E351. Residues H382 and K510 contribute to the active site.

It belongs to the GPI family.

Its subcellular location is the cytoplasm. The catalysed reaction is alpha-D-glucose 6-phosphate = beta-D-fructose 6-phosphate. It functions in the pathway carbohydrate biosynthesis; gluconeogenesis. Its pathway is carbohydrate degradation; glycolysis; D-glyceraldehyde 3-phosphate and glycerone phosphate from D-glucose: step 2/4. Its function is as follows. Catalyzes the reversible isomerization of glucose-6-phosphate to fructose-6-phosphate. The chain is Glucose-6-phosphate isomerase from Shewanella woodyi (strain ATCC 51908 / MS32).